Here is a 110-residue protein sequence, read N- to C-terminus: UPF0145 protein LMOf2365_0219 (110 aa).

Belongs to the UPF0145 family.

This Listeria monocytogenes serotype 4b (strain F2365) protein is UPF0145 protein LMOf2365_0219.